The following is a 184-amino-acid chain: ATP-dependent protease subunit HslV (184 aa).

The active site involves T12. Na(+) is bound by residues A166, C169, and T172.

Belongs to the peptidase T1B family. HslV subfamily. A double ring-shaped homohexamer of HslV is capped on each side by a ring-shaped HslU homohexamer. The assembly of the HslU/HslV complex is dependent on binding of ATP.

It localises to the cytoplasm. The catalysed reaction is ATP-dependent cleavage of peptide bonds with broad specificity.. Allosterically activated by HslU binding. Functionally, protease subunit of a proteasome-like degradation complex believed to be a general protein degrading machinery. This Brucella anthropi (strain ATCC 49188 / DSM 6882 / CCUG 24695 / JCM 21032 / LMG 3331 / NBRC 15819 / NCTC 12168 / Alc 37) (Ochrobactrum anthropi) protein is ATP-dependent protease subunit HslV.